Reading from the N-terminus, the 302-residue chain is Sulfate adenylyltransferase subunit 2 (302 aa).

Belongs to the PAPS reductase family. CysD subfamily. Heterodimer composed of CysD, the smaller subunit, and CysN.

It catalyses the reaction sulfate + ATP + H(+) = adenosine 5'-phosphosulfate + diphosphate. It participates in sulfur metabolism; hydrogen sulfide biosynthesis; sulfite from sulfate: step 1/3. With CysN forms the ATP sulfurylase (ATPS) that catalyzes the adenylation of sulfate producing adenosine 5'-phosphosulfate (APS) and diphosphate, the first enzymatic step in sulfur assimilation pathway. APS synthesis involves the formation of a high-energy phosphoric-sulfuric acid anhydride bond driven by GTP hydrolysis by CysN coupled to ATP hydrolysis by CysD. In Escherichia coli O81 (strain ED1a), this protein is Sulfate adenylyltransferase subunit 2.